Consider the following 610-residue polypeptide: MPEYRSKTSTYGRNMAGARALWRATGMKDDDFQKPIIAIANSFTQFVPGHVHLKDLGQLVAREIERLGGVAKEFNTIAVDDGIAMGHDGMLYSLPSREIIADSVEYMANAHCADALVCISNCDKITPGMLMASLRLNIPTVFVSGGPMEAGKTTLADHKLDLVDAMVLAADPHASDEEVATVERSACPTCGSCSGMFTANSMNCLTEALGLSLPGNGTVVATHSDRKQLFLNAGRTVIELCHRWYGAEDATALPRGIATFAAFENAITLDIAMGGSTNTILHLLAAAQEAQVSFTMQDIDRLSRNVPQLCKVAPNTQKYHIEDVHRAGGIFGILAELARGNLLHTDVATVHSKTLGEAIATWDIIGTQDEAVHTFYKAGSAGIPTQVAFSQSTRWPSLDTDRTEGCIRDMEHAFSKEGGLAVLYGNIAQDGCVVKTAGVDASIHVFEGSALVYESQEAAVKGILSDEVQPGMIVVIRYEGPKGGPGMQEMLYPTSYLKSKGLGKQCALFTDGRFSGGTSGLSIGHASPEAAAGGAIGLIRDGDRIRIDIPQRAINVLISEEELASRRLEQHAIGWKPAQSRTRKVSSALKAYSLLATSADKGAVRNKTLL.

Asp81 lines the Mg(2+) pocket. Cys122 is a binding site for [2Fe-2S] cluster. Positions 123 and 124 each coordinate Mg(2+). At Lys124 the chain carries N6-carboxylysine. Cys193 contributes to the [2Fe-2S] cluster binding site. Position 489 (Glu489) interacts with Mg(2+). Residue Ser515 is the Proton acceptor of the active site.

The protein belongs to the IlvD/Edd family. In terms of assembly, homodimer. [2Fe-2S] cluster serves as cofactor. Requires Mg(2+) as cofactor.

The catalysed reaction is (2R)-2,3-dihydroxy-3-methylbutanoate = 3-methyl-2-oxobutanoate + H2O. The enzyme catalyses (2R,3R)-2,3-dihydroxy-3-methylpentanoate = (S)-3-methyl-2-oxopentanoate + H2O. Its pathway is amino-acid biosynthesis; L-isoleucine biosynthesis; L-isoleucine from 2-oxobutanoate: step 3/4. It functions in the pathway amino-acid biosynthesis; L-valine biosynthesis; L-valine from pyruvate: step 3/4. Its function is as follows. Functions in the biosynthesis of branched-chain amino acids. Catalyzes the dehydration of (2R,3R)-2,3-dihydroxy-3-methylpentanoate (2,3-dihydroxy-3-methylvalerate) into 2-oxo-3-methylpentanoate (2-oxo-3-methylvalerate) and of (2R)-2,3-dihydroxy-3-methylbutanoate (2,3-dihydroxyisovalerate) into 2-oxo-3-methylbutanoate (2-oxoisovalerate), the penultimate precursor to L-isoleucine and L-valine, respectively. The chain is Dihydroxy-acid dehydratase from Xylella fastidiosa (strain M12).